The following is a 464-amino-acid chain: ATP synthase subunit beta (464 aa).

Residue 153 to 160 (GGAGVGKT) participates in ATP binding.

The protein belongs to the ATPase alpha/beta chains family. F-type ATPases have 2 components, CF(1) - the catalytic core - and CF(0) - the membrane proton channel. CF(1) has five subunits: alpha(3), beta(3), gamma(1), delta(1), epsilon(1). CF(0) has three main subunits: a(1), b(2) and c(9-12). The alpha and beta chains form an alternating ring which encloses part of the gamma chain. CF(1) is attached to CF(0) by a central stalk formed by the gamma and epsilon chains, while a peripheral stalk is formed by the delta and b chains.

It localises to the cell inner membrane. The catalysed reaction is ATP + H2O + 4 H(+)(in) = ADP + phosphate + 5 H(+)(out). Produces ATP from ADP in the presence of a proton gradient across the membrane. The catalytic sites are hosted primarily by the beta subunits. This is ATP synthase subunit beta from Burkholderia lata (strain ATCC 17760 / DSM 23089 / LMG 22485 / NCIMB 9086 / R18194 / 383).